A 510-amino-acid polypeptide reads, in one-letter code: MEFSTKALDLSKAGQNGFLATKTDCLVVGLFEGQSLAGVAKALDVATKGLVARLVKQGDFEGKRGTQLMLHEVAGVGAARVLLVGLGKEADFNDKAFAEAVRTATRALGGTRAASALWCLVQQPPQQRDVAWAIITTITLVREAGYRLLERHPELKRAPRGAGANEKASLRKIVLAVDVGDAKAASQAAVRGTAIANGMELTRDLGNLPSNICTPTYLANTARGIAKRHKLKVEILGRKQIEALNMGAFLAVTKGSVEPPQFIVLRYDGASAKQAPVVLVGKGITFDTGGISLKPGEGMDEMKYDMCGAASVLGTIQAVAEMGLKQNVIAVVPTCENMPSGIATKPGDVVTSMSGQTIEILNTDAEGRLILCDALTYVERFKPAAVIDVATLTGACIIALGHVNSGLYARSDALADQLLGAGRKAMDTAWRLPLDDDYQDQLKSNFADMANIGGRPAGSVTAACFLARYTEKYDWAHLDIAGTAWKSGAAKGATGRPVPLLTQFLMDRAA.

Residues Lys-282 and Asp-287 each contribute to the Mn(2+) site. The active site involves Lys-294. The Mn(2+) site is built by Asp-305, Asp-364, and Glu-366. Residue Arg-368 is part of the active site.

This sequence belongs to the peptidase M17 family. It depends on Mn(2+) as a cofactor.

Its subcellular location is the cytoplasm. It catalyses the reaction Release of an N-terminal amino acid, Xaa-|-Yaa-, in which Xaa is preferably Leu, but may be other amino acids including Pro although not Arg or Lys, and Yaa may be Pro. Amino acid amides and methyl esters are also readily hydrolyzed, but rates on arylamides are exceedingly low.. The enzyme catalyses Release of an N-terminal amino acid, preferentially leucine, but not glutamic or aspartic acids.. In terms of biological role, presumably involved in the processing and regular turnover of intracellular proteins. Catalyzes the removal of unsubstituted N-terminal amino acids from various peptides. This chain is Probable cytosol aminopeptidase, found in Cupriavidus metallidurans (strain ATCC 43123 / DSM 2839 / NBRC 102507 / CH34) (Ralstonia metallidurans).